Consider the following 303-residue polypeptide: Aquaporin-7 (303 aa).

The Cytoplasmic portion of the chain corresponds to 1-21 (MAPRSVLETIQSVLQKNMVRE). Residue Ser5 is modified to Phosphoserine. A helical membrane pass occupies residues 22–39 (FLAEFLSTYVMMVFGLGS). The Extracellular segment spans residues 40-52 (VAHMVLGENSGSY). Residues 53 to 70 (LGVNLGFGFGVTMGVHVA) form a helical membrane-spanning segment. Topologically, residues 71–74 (GGIS) are cytoplasmic. The discontinuously helical intramembrane region spans 75 to 88 (GAHMNAAVTFTNCA). The NPA 1 motif lies at 79-81 (NAA). Over 89–96 (LGRMTWKK) the chain is Cytoplasmic. Residues 97 to 117 (FPVYVLGQFLGSFSAAATTYL) form a helical membrane-spanning segment. Residues 118 to 152 (IFYGAINHFAGGDLLVTGSKATANIFATYLPEYMT) are Extracellular-facing. The helical transmembrane segment at 153-173 (LWRGFLDEAFVTGMLQLCLFA) threads the bilayer. Residues 174–185 (ITDKKNSPALQG) lie on the Cytoplasmic side of the membrane. Residues 186 to 202 (TEPLVIGILVTVLGVSL) traverse the membrane as a helical segment. Residues 203–206 (GMNS) lie on the Extracellular side of the membrane. The segment at residues 207–220 (GYAINPSRDLPPRL) is an intramembrane region (discontinuously helical). An NPA 2 motif is present at residues 211–213 (NPS). Residues 221 to 238 (FTFIAGWGKQVFRAGNNW) lie on the Extracellular side of the membrane. A helical transmembrane segment spans residues 239 to 260 (WWVPVVAPLLGAYLGGIVYLGL). Over 261-303 (IHPSIPQDPQRLENFTARDQKVTASYKNAASANISGSVPLEHF) the chain is Cytoplasmic.

Belongs to the MIP/aquaporin (TC 1.A.8) family. In terms of assembly, homotetramer; each monomer provides an independent glycerol/water pore. Two homotetramers on opposing membranes can dimerize, forming a cell-cell junction. Interacts with PLIN1. In terms of processing, phosphorylation by PKA could prevent the interaction with PLIN1. Detected in proximal tubules in kidney. Detected in the capillary network between muscle fibers in skeletal muscle and heart, and in spermatids and on spermatozoa tails in testis and epididymis. Detected in white and brown adipose tissue, especially on small blood vessels (at protein level). Detected in kidney and white adipose tissue.

The protein localises to the cell membrane. It is found in the cytoplasmic vesicle membrane. The protein resides in the lipid droplet. The enzyme catalyses glycerol(in) = glycerol(out). It catalyses the reaction H2O(in) = H2O(out). The catalysed reaction is urea(in) = urea(out). Glycerol transport is regulated by pH, with the porin being permeable to glycerol at pH 7.4 but not at pH 5.5. Water permeability, however, is not influenced by pH. Aquaglyceroporins form homotetrameric transmembrane channels, with each monomer independently mediating glycerol and water transport across the plasma membrane along their osmotic gradient. Could also be permeable to urea. Mediates the efflux of glycerol, formed upon triglyceride hydrolysis, to avoid its accumulation in adipocytes and to make it available to other tissues. In the kidney, mediates the reabsorption of glycerol, preventing its loss in urine, again participating to energy homeostasis. In pancreatic beta cells, it also mediates the efflux of glycerol, regulating its intracellular levels. In Mus musculus (Mouse), this protein is Aquaporin-7.